We begin with the raw amino-acid sequence, 208 residues long: Large ribosomal subunit protein uL4 (208 aa).

A disordered region spans residues 44–79; that stretch reads QRQGTHKSKERSEISGSTRKIGRQKGGGGARRGDMN.

The protein belongs to the universal ribosomal protein uL4 family. Part of the 50S ribosomal subunit.

Its function is as follows. One of the primary rRNA binding proteins, this protein initially binds near the 5'-end of the 23S rRNA. It is important during the early stages of 50S assembly. It makes multiple contacts with different domains of the 23S rRNA in the assembled 50S subunit and ribosome. Forms part of the polypeptide exit tunnel. The sequence is that of Large ribosomal subunit protein uL4 from Bacteroides thetaiotaomicron (strain ATCC 29148 / DSM 2079 / JCM 5827 / CCUG 10774 / NCTC 10582 / VPI-5482 / E50).